The sequence spans 213 residues: Putative manganese efflux pump MntP (213 aa).

Transmembrane regions (helical) follow at residues 3–23 (ILSIVLTGFGLAMDAFAVSVA), 36–56 (ALKVALFFGGFQALMPLIGWG), 67–87 (AFDHWIAFILLSFIGGKMIFE), 130–150 (LAIATSIDALAVGVSFAFLGI), 152–172 (IVQTIIIIGIITFVLCFLGVI), and 187–207 (IVGGVILILIGINILLEHTGI).

This sequence belongs to the MntP (TC 9.B.29) family.

It is found in the cell membrane. Probably functions as a manganese efflux pump. The chain is Putative manganese efflux pump MntP from Clostridium perfringens (strain 13 / Type A).